The sequence spans 101 residues: Gamma-secretase subunit PEN-2 (101 aa).

Residues 1–17 (MNLERIPNEEKLSLCRR) are Cytoplasmic-facing. Residues 18–36 (YYLGGFAFLPFLWLVNILW) constitute an intramembrane region (helical). At 37-57 (FFKEAFLKPAYTEQPQIKSYV) the chain is on the cytoplasmic side. The chain crosses the membrane as a helical span at residues 58-78 (KKSALGLLLWVAVLTTWITVF). At 79-101 (QHFRAQWGEVGDYLSFTIPLGTA) the chain is on the lumenal side.

This sequence belongs to the PEN-2 family. In terms of assembly, the functional gamma-secretase complex is composed of at least four polypeptides: a presenilin homodimer (psen1 or psen2), nicastrin (ncstn), aph1 (aph1a or aph1b) and psenen.

The protein resides in the endoplasmic reticulum membrane. It is found in the golgi apparatus. The protein localises to the golgi stack membrane. Its subcellular location is the cell membrane. It localises to the membrane. In terms of biological role, essential subunit of the gamma-secretase complex, an endoprotease complex that catalyzes the intramembrane cleavage of integral membrane proteins such as Notch receptors and APP (amyloid-beta precursor protein). The gamma-secretase complex plays a role in Notch and Wnt signaling cascades and regulation of downstream processes via its role in processing key regulatory proteins. This chain is Gamma-secretase subunit PEN-2 (psenen), found in Danio rerio (Zebrafish).